A 160-amino-acid chain; its full sequence is 2-C-methyl-D-erythritol 2,4-cyclodiphosphate synthase (160 aa).

Positions 12 and 14 each coordinate a divalent metal cation. 4-CDP-2-C-methyl-D-erythritol 2-phosphate is bound by residues 12–14 (DVH) and 38–39 (HS). Histidine 46 lines the a divalent metal cation pocket. 4-CDP-2-C-methyl-D-erythritol 2-phosphate is bound by residues 60-62 (DIG), 65-69 (FPDTD), 136-139 (TTTE), phenylalanine 143, and arginine 146.

It belongs to the IspF family. As to quaternary structure, homotrimer. A divalent metal cation serves as cofactor.

It catalyses the reaction 4-CDP-2-C-methyl-D-erythritol 2-phosphate = 2-C-methyl-D-erythritol 2,4-cyclic diphosphate + CMP. The protein operates within isoprenoid biosynthesis; isopentenyl diphosphate biosynthesis via DXP pathway; isopentenyl diphosphate from 1-deoxy-D-xylulose 5-phosphate: step 4/6. Involved in the biosynthesis of isopentenyl diphosphate (IPP) and dimethylallyl diphosphate (DMAPP), two major building blocks of isoprenoid compounds. Catalyzes the conversion of 4-diphosphocytidyl-2-C-methyl-D-erythritol 2-phosphate (CDP-ME2P) to 2-C-methyl-D-erythritol 2,4-cyclodiphosphate (ME-CPP) with a corresponding release of cytidine 5-monophosphate (CMP). This Acinetobacter baumannii (strain AB307-0294) protein is 2-C-methyl-D-erythritol 2,4-cyclodiphosphate synthase.